Here is a 240-residue protein sequence, read N- to C-terminus: MDMKKYAAEAIGTFWLTFAGCGSAVIAAGFPQVGIGLVGVSLAFGLSVVTMAYAIGHISGCHLNPAVTVGLAAGGRFPAGQILPYVIAQVCGAIVAAELLYIIASGAPGFDVTKGFASNGYDAHSPGQYSMMACFLTEVVMTMMFLFIIMGATHGRAPAGFAPLAIGLALVMIHLVSIPVTNTSVNPARSTGPALFVGGWAMAQLWLFWVAPLIGGALGGVIYRWLSEEPTGVVAGAKAA.

Helical transmembrane passes span 10–30 (AIGTFWLTFAGCGSAVIAAGF) and 35–55 (IGLVGVSLAFGLSVVTMAYAI). Residues 64 to 66 (NPA) carry the NPA 1 motif. 3 helical membrane-spanning segments follow: residues 82–102 (ILPYVIAQVCGAIVAAELLYI), 131–151 (MMACFLTEVVMTMMFLFIIMG), and 160–180 (GFAPLAIGLALVMIHLVSIPV). Residues 186 to 188 (NPA) carry the NPA 2 motif. A helical transmembrane segment spans residues 194-214 (ALFVGGWAMAQLWLFWVAPLI).

It belongs to the MIP/aquaporin (TC 1.A.8) family. Homotetramer.

The protein resides in the cell inner membrane. The enzyme catalyses H2O(in) = H2O(out). Its function is as follows. Channel that permits osmotically driven movement of water in both directions. It is involved in the osmoregulation and in the maintenance of cell turgor during volume expansion in rapidly growing cells. It mediates rapid entry or exit of water in response to abrupt changes in osmolarity. The chain is Aquaporin Z from Bradyrhizobium diazoefficiens (strain JCM 10833 / BCRC 13528 / IAM 13628 / NBRC 14792 / USDA 110).